We begin with the raw amino-acid sequence, 624 residues long: 1-deoxy-D-xylulose-5-phosphate synthase (624 aa).

Thiamine diphosphate contacts are provided by residues His-80 and 121-123; that span reads GHS. Asp-152 provides a ligand contact to Mg(2+). Thiamine diphosphate is bound by residues 153-154, Asn-181, Tyr-288, and Glu-370; that span reads GA. Position 181 (Asn-181) interacts with Mg(2+).

It belongs to the transketolase family. DXPS subfamily. In terms of assembly, homodimer. Requires Mg(2+) as cofactor. The cofactor is thiamine diphosphate.

It catalyses the reaction D-glyceraldehyde 3-phosphate + pyruvate + H(+) = 1-deoxy-D-xylulose 5-phosphate + CO2. Its pathway is metabolic intermediate biosynthesis; 1-deoxy-D-xylulose 5-phosphate biosynthesis; 1-deoxy-D-xylulose 5-phosphate from D-glyceraldehyde 3-phosphate and pyruvate: step 1/1. Catalyzes the acyloin condensation reaction between C atoms 2 and 3 of pyruvate and glyceraldehyde 3-phosphate to yield 1-deoxy-D-xylulose-5-phosphate (DXP). This chain is 1-deoxy-D-xylulose-5-phosphate synthase, found in Proteus mirabilis (strain HI4320).